The primary structure comprises 534 residues: O-phosphoserine--tRNA(Cys) ligase (534 aa).

Substrate is bound by residues 186 to 188 (HMT), 231 to 233 (SAS), 273 to 274 (YY), and N325.

This sequence belongs to the class-II aminoacyl-tRNA synthetase family. O-phosphoseryl-tRNA(Cys) synthetase subfamily. In terms of assembly, homotetramer. Interacts with SepCysS.

It carries out the reaction tRNA(Cys) + O-phospho-L-serine + ATP = O-phospho-L-seryl-tRNA(Cys) + AMP + diphosphate. In terms of biological role, catalyzes the attachment of O-phosphoserine (Sep) to tRNA(Cys). The chain is O-phosphoserine--tRNA(Cys) ligase (sepS) from Archaeoglobus fulgidus (strain ATCC 49558 / DSM 4304 / JCM 9628 / NBRC 100126 / VC-16).